The primary structure comprises 428 residues: Adenylosuccinate synthetase (428 aa).

Residues 12 to 18 (GDEGKGK) and 40 to 42 (GHT) contribute to the GTP site. Catalysis depends on aspartate 13, which acts as the Proton acceptor. The Mg(2+) site is built by aspartate 13 and glycine 40. Residues 13 to 16 (DEGK), 38 to 41 (NAGH), threonine 130, arginine 144, glutamine 225, threonine 240, and arginine 304 each bind IMP. The Proton donor role is filled by histidine 41. 300–306 (VTTGRAR) contacts substrate. Residues arginine 306, 332–334 (KID), and 414–416 (SVG) contribute to the GTP site.

It belongs to the adenylosuccinate synthetase family. In terms of assembly, homodimer. It depends on Mg(2+) as a cofactor.

Its subcellular location is the cytoplasm. The enzyme catalyses IMP + L-aspartate + GTP = N(6)-(1,2-dicarboxyethyl)-AMP + GDP + phosphate + 2 H(+). The protein operates within purine metabolism; AMP biosynthesis via de novo pathway; AMP from IMP: step 1/2. Its function is as follows. Plays an important role in the de novo pathway of purine nucleotide biosynthesis. Catalyzes the first committed step in the biosynthesis of AMP from IMP. The sequence is that of Adenylosuccinate synthetase from Clostridium kluyveri (strain ATCC 8527 / DSM 555 / NBRC 12016 / NCIMB 10680 / K1).